Reading from the N-terminus, the 304-residue chain is Peroxisomal membrane protein 13 (304 aa).

2 disordered regions span residues 1–78 and 258–304; these read MASQ…WEQQ and PRKM…VWGN. Polar residues-rich tracts occupy residues 19 to 44 and 56 to 67; these read NTSGPNPFRPPSNTSTAGSVEASGTA and RPNTAANMNSLS. The span at 262 to 279 shows a compositional bias: low complexity; the sequence is QQPPQGPNGLPLPHQPHG.

This sequence belongs to the peroxin-13 family. In terms of assembly, interacts with PEX14; forming the PEX13-PEX14 docking complex. Interacts (via N-terminus) with PEX7, but not with PEX5. Interacts with APEM9 (via N-terminus). As to expression, highly expressed in pollen. Detected in shoots, roots, stems, leaves, inflorescences and emasculated postils. Strongly expressed in both male and female gametophytes during fertilization.

It localises to the peroxisome membrane. Its function is as follows. Component of the PEX13-PEX14 docking complex, a translocon channel that specifically mediates the import of peroxisomal cargo proteins bound to PEX5 receptor. The PEX13-PEX14 docking complex forms a large import pore which can be opened to a diameter of about 9 nm. Mechanistically, PEX5 receptor along with cargo proteins associates with the PEX14 subunit of the PEX13-PEX14 docking complex in the cytosol, leading to the insertion of the receptor into the organelle membrane with the concomitant translocation of the cargo into the peroxisome matrix. Essential for pollen-tube discharge that take place only in the presence of functional peroxisomes in either the male or the female gametophyte. This is Peroxisomal membrane protein 13 from Arabidopsis thaliana (Mouse-ear cress).